The following is a 252-amino-acid chain: tRNA1(Val) (adenine(37)-N6)-methyltransferase (252 aa).

It belongs to the methyltransferase superfamily. tRNA (adenine-N(6)-)-methyltransferase family.

It is found in the cytoplasm. The enzyme catalyses adenosine(37) in tRNA1(Val) + S-adenosyl-L-methionine = N(6)-methyladenosine(37) in tRNA1(Val) + S-adenosyl-L-homocysteine + H(+). Its function is as follows. Specifically methylates the adenine in position 37 of tRNA(1)(Val) (anticodon cmo5UAC). The sequence is that of tRNA1(Val) (adenine(37)-N6)-methyltransferase from Proteus mirabilis (strain HI4320).